The primary structure comprises 166 residues: Crossover junction endodeoxyribonuclease RuvC (166 aa).

Residues Asp9, Glu70, and Asp144 contribute to the active site. Residues Asp9, Glu70, and Asp144 each coordinate Mg(2+).

Belongs to the RuvC family. Homodimer which binds Holliday junction (HJ) DNA. The HJ becomes 2-fold symmetrical on binding to RuvC with unstacked arms; it has a different conformation from HJ DNA in complex with RuvA. In the full resolvosome a probable DNA-RuvA(4)-RuvB(12)-RuvC(2) complex forms which resolves the HJ. Requires Mg(2+) as cofactor.

It is found in the cytoplasm. It carries out the reaction Endonucleolytic cleavage at a junction such as a reciprocal single-stranded crossover between two homologous DNA duplexes (Holliday junction).. Its function is as follows. The RuvA-RuvB-RuvC complex processes Holliday junction (HJ) DNA during genetic recombination and DNA repair. Endonuclease that resolves HJ intermediates. Cleaves cruciform DNA by making single-stranded nicks across the HJ at symmetrical positions within the homologous arms, yielding a 5'-phosphate and a 3'-hydroxyl group; requires a central core of homology in the junction. The consensus cleavage sequence is 5'-(A/T)TT(C/G)-3'. Cleavage occurs on the 3'-side of the TT dinucleotide at the point of strand exchange. HJ branch migration catalyzed by RuvA-RuvB allows RuvC to scan DNA until it finds its consensus sequence, where it cleaves and resolves the cruciform DNA. This is Crossover junction endodeoxyribonuclease RuvC from Neorickettsia sennetsu (strain ATCC VR-367 / Miyayama) (Ehrlichia sennetsu).